We begin with the raw amino-acid sequence, 309 residues long: Probable manganese-dependent inorganic pyrophosphatase (309 aa).

Mn(2+) contacts are provided by H9, D13, D15, D75, H97, and D149.

This sequence belongs to the PPase class C family. The cofactor is Mn(2+).

It localises to the cytoplasm. The enzyme catalyses diphosphate + H2O = 2 phosphate + H(+). The protein is Probable manganese-dependent inorganic pyrophosphatase of Bacillus cereus (strain G9842).